The following is a 154-amino-acid chain: Probable transport accessory protein MmpS4 (154 aa).

A run of 2 helical transmembrane segments spans residues 19–39 (IWIP…VYRV) and 97–117 (QLPW…NLVA).

This sequence belongs to the MmpS family.

The protein resides in the cell membrane. This chain is Probable transport accessory protein MmpS4, found in Mycobacterium leprae (strain TN).